The primary structure comprises 417 residues: Gamma-glutamyl phosphate reductase (417 aa).

This sequence belongs to the gamma-glutamyl phosphate reductase family.

It localises to the cytoplasm. The enzyme catalyses L-glutamate 5-semialdehyde + phosphate + NADP(+) = L-glutamyl 5-phosphate + NADPH + H(+). It functions in the pathway amino-acid biosynthesis; L-proline biosynthesis; L-glutamate 5-semialdehyde from L-glutamate: step 2/2. Its function is as follows. Catalyzes the NADPH-dependent reduction of L-glutamate 5-phosphate into L-glutamate 5-semialdehyde and phosphate. The product spontaneously undergoes cyclization to form 1-pyrroline-5-carboxylate. The protein is Gamma-glutamyl phosphate reductase of Photorhabdus laumondii subsp. laumondii (strain DSM 15139 / CIP 105565 / TT01) (Photorhabdus luminescens subsp. laumondii).